Consider the following 1770-residue polypeptide: Serine/threonine-protein kinase RIM15 (1770 aa).

A disordered region spans residues 334 to 358 (HSLSTFPQDNGNNNNNNNNNNNNNN). The segment covering 343-358 (NGNNNNNNNNNNNNNN) has biased composition (low complexity). S380 and S476 each carry phosphoserine. Disordered stretches follow at residues 530–563 (TPTA…LDSN) and 583–694 (STIS…NSVL). Positions 583–601 (STISIDRDNNTNSRGSSMK) are enriched in polar residues. Low complexity predominate over residues 611 to 632 (SRTSNSERPSSSSSRLGIRSRS). Over residues 637–660 (QKIEYSHVDNDDRTNEMLSRDKDS) the composition is skewed to basic and acidic residues. Residues 669 to 692 (TTITSSTQATTTGTKTNSNNSTNS) show a composition bias toward low complexity. The residue at position 704 (T704) is a Phosphothreonine. Phosphoserine occurs at positions 709, 733, 736, and 737. Phosphothreonine is present on T747. Residues 794–1254 (YDILKPISKG…IQEIKDHPYF (461 aa)) enclose the Protein kinase domain. ATP is bound by residues 800–808 (ISKGAYGSV) and K823. D918 (proton acceptor) is an active-site residue. Low complexity predominate over residues 970–980 (NNFTMNNNNSN). The interval 970-1032 (NNFTMNNNNS…MTPTPSTNTV (63 aa)) is disordered. Positions 981-990 (HSQLSTPDSF) are enriched in polar residues. Residues 1014 to 1031 (YSSTSNSHSMTPTPSTNT) show a composition bias toward low complexity. S1044, S1048, and S1064 each carry phosphoserine. A Phosphothreonine; by PHO85 modification is found at T1075. Residues 1255-1320 (KNVDWDHVYD…NTDVSELSAA (66 aa)) enclose the AGC-kinase C-terminal domain. Low complexity predominate over residues 1378 to 1391 (TGYITPNGTGTTTT). The interval 1378-1403 (TGYITPNGTGTTTTSAKNSPNLKNLS) is disordered. The segment covering 1392–1401 (SAKNSPNLKN) has biased composition (polar residues). S1421 bears the Phosphoserine mark. Disordered stretches follow at residues 1448-1507 (KSEH…STFG) and 1519-1572 (FSTR…PANT). Low complexity predominate over residues 1463 to 1481 (SSASLMGSSSDGSVSTPGS). A phosphoserine mark is found at S1531, S1538, S1542, and S1565. In terms of domain architecture, Response regulatory spans 1636-1750 (DVLVCEPIPI…ELKKLVAKYA (115 aa)). S1764 is modified (phosphoserine).

Belongs to the protein kinase superfamily. Ser/Thr protein kinase family. Interacts with the cyclin-dependent kinase (CDK) PHO85 and IGO1. Post-translationally, autophosphorylated. Phosphorylation by PKA strongly inhibits kinase activity. Phosphorylation by cyclin-CDK PHO80-PHO85 under favorable growth condition causes inactivation of RIM15 by promoting its export to the cytoplasm.

Its subcellular location is the cytoplasm. It localises to the nucleus. The enzyme catalyses L-seryl-[protein] + ATP = O-phospho-L-seryl-[protein] + ADP + H(+). It carries out the reaction L-threonyl-[protein] + ATP = O-phospho-L-threonyl-[protein] + ADP + H(+). With respect to regulation, kinase activity is inhibited by phosphorylation by cAMP-dependent protein kinase (PKA). Protein kinase that positively regulates proper entry into stationary phase of cells under nutrient starvation conditions. Involved in glycogen and trehalose accumulation, derepression of stress-induced genes, induction of thermotolerance and starvation resistance, and proper G1 cell cycle arrest. Also involved in the activation of a meiotic genes activation pathway. Phosphorylates IGO1 and IGO2, both involved in the TORC1 control of gene expression and chronological life span. The protein is Serine/threonine-protein kinase RIM15 (RIM15) of Saccharomyces cerevisiae (strain ATCC 204508 / S288c) (Baker's yeast).